Here is a 51-residue protein sequence, read N- to C-terminus: Large ribosomal subunit protein eL39 (51 aa).

It belongs to the eukaryotic ribosomal protein eL39 family.

The protein is Large ribosomal subunit protein eL39 (rpl39e) of Pyrobaculum aerophilum (strain ATCC 51768 / DSM 7523 / JCM 9630 / CIP 104966 / NBRC 100827 / IM2).